The sequence spans 476 residues: Glycogen synthase (476 aa).

K15 is an ADP-alpha-D-glucose binding site.

The protein belongs to the glycosyltransferase 1 family. Bacterial/plant glycogen synthase subfamily.

It carries out the reaction [(1-&gt;4)-alpha-D-glucosyl](n) + ADP-alpha-D-glucose = [(1-&gt;4)-alpha-D-glucosyl](n+1) + ADP + H(+). The protein operates within glycan biosynthesis; glycogen biosynthesis. Its function is as follows. Synthesizes alpha-1,4-glucan chains using ADP-glucose. This is Glycogen synthase from Bacillus cereus (strain Q1).